A 259-amino-acid polypeptide reads, in one-letter code: NAD kinase (259 aa).

The active-site Proton acceptor is the aspartate 49. NAD(+) contacts are provided by residues aspartate 49–glycine 50, arginine 54, asparagine 118–glutamate 119, aspartate 148, alanine 156, threonine 159–serine 164, and alanine 183.

This sequence belongs to the NAD kinase family. It depends on a divalent metal cation as a cofactor.

The protein resides in the cytoplasm. It catalyses the reaction NAD(+) + ATP = ADP + NADP(+) + H(+). In terms of biological role, involved in the regulation of the intracellular balance of NAD and NADP, and is a key enzyme in the biosynthesis of NADP. Catalyzes specifically the phosphorylation on 2'-hydroxyl of the adenosine moiety of NAD to yield NADP. This Xylella fastidiosa (strain 9a5c) protein is NAD kinase.